A 369-amino-acid polypeptide reads, in one-letter code: Hsc70-interacting protein (369 aa).

The disordered stretch occupies residues 38-97 (MGGKVPPATQKAKSEENTKEEKPDSKKVEEDLKADEPSSEESDLEIDKEGVIEPDTDAPQ). Over residues 49 to 73 (AKSEENTKEEKPDSKKVEEDLKADE) the composition is skewed to basic and acidic residues. 3 TPR repeats span residues 114-147 (ANDK…NPRL), 148-181 (AILY…NPDS), and 182-215 (AQPY…DYDE). Residues 256–272 (KAREEHERAQREEEARR) are compositionally biased toward basic and acidic residues. The tract at residues 256-300 (KAREEHERAQREEEARRQSGAQYGSFPGGFPGGMPGNFPGGMPGM) is disordered. Positions 281 to 300 (FPGGFPGGMPGNFPGGMPGM) are enriched in gly residues. In terms of domain architecture, STI1 spans 319–358 (DPEVLAAMQDPEVMVAFQDVAQNPANMSKYQSNPKVMNLI). Phosphoserine; by GRK5 is present on S346. An N6-acetyllysine mark is found at K353 and K360.

It belongs to the FAM10 family. In terms of assembly, homotetramer. Interacts with HSC70 as well as DNAJ homologs and HSP90. Interacts (via the C-terminus 303- 319 AA) with GRK5.

It is found in the cytoplasm. One HIP oligomer binds the ATPase domains of at least two HSC70 molecules dependent on activation of the HSC70 ATPase by HSP40. Stabilizes the ADP state of HSC70 that has a high affinity for substrate protein. Through its own chaperone activity, it may contribute to the interaction of HSC70 with various target proteins. The sequence is that of Hsc70-interacting protein (ST13) from Homo sapiens (Human).